A 353-amino-acid polypeptide reads, in one-letter code: Guanine nucleotide-binding protein G(q) subunit alpha (353 aa).

2 S-palmitoyl cysteine lipidation sites follow: cysteine 3 and cysteine 4. Residues 32-353 (RELKLLLLGT…QLNLKEYNLV (322 aa)) enclose the G-alpha domain. The tract at residues 35–48 (KLLLLGTGESGKST) is G1 motif. Residues 40–47 (GTGESGKS), 174–180 (LRVRAPT), 199–203 (DVGGQ), 268–271 (NKKD), and alanine 325 each bind GTP. The Mg(2+) site is built by serine 47 and threonine 180. Residues 172-180 (DILRVRAPT) are G2 motif. Positions 195–204 (FRMVDVGGQR) are G3 motif. The tract at residues 264–271 (ILFLNKKD) is G4 motif. The G5 motif stretch occupies residues 323–328 (TCATDT).

This sequence belongs to the G-alpha family. G(q) subfamily. G proteins are composed of 3 units; alpha, beta and gamma. The alpha chain contains the guanine nucleotide binding site.

Its function is as follows. Guanine nucleotide-binding proteins (G proteins) are involved as modulators or transducers in various transmembrane signaling systems. In Homarus americanus (American lobster), this protein is Guanine nucleotide-binding protein G(q) subunit alpha.